The primary structure comprises 397 residues: Elongation factor Tu (397 aa).

Residues 10-207 (KPHVNIGTIG…AVDTYIEEPK (198 aa)) enclose the tr-type G domain. A G1 region spans residues 19 to 26 (GHVDHGKT). 19-26 (GHVDHGKT) contacts GTP. Thr26 provides a ligand contact to Mg(2+). Positions 60–64 (GITIN) are G2. The tract at residues 81 to 84 (DCPG) is G3. GTP is bound by residues 81 to 85 (DCPGH) and 136 to 139 (NKID). A G4 region spans residues 136 to 139 (NKID). Residues 177 to 179 (SAL) form a G5 region.

It belongs to the TRAFAC class translation factor GTPase superfamily. Classic translation factor GTPase family. EF-Tu/EF-1A subfamily. Monomer.

Its subcellular location is the cytoplasm. The enzyme catalyses GTP + H2O = GDP + phosphate + H(+). GTP hydrolase that promotes the GTP-dependent binding of aminoacyl-tRNA to the A-site of ribosomes during protein biosynthesis. This chain is Elongation factor Tu, found in Metamycoplasma hominis (strain ATCC 23114 / DSM 25592 / NBRC 14850 / NCTC 10111 / PG21) (Mycoplasma hominis).